A 113-amino-acid polypeptide reads, in one-letter code: Nucleoid-associated protein CLH_3225 (113 aa).

The segment covering 1-14 (MAKGGFPGGFGGGN) has biased composition (gly residues). The interval 1-31 (MAKGGFPGGFGGGNMNNLMKQAQKLQKQMED) is disordered.

It belongs to the YbaB/EbfC family. In terms of assembly, homodimer.

It is found in the cytoplasm. The protein resides in the nucleoid. Binds to DNA and alters its conformation. May be involved in regulation of gene expression, nucleoid organization and DNA protection. The chain is Nucleoid-associated protein CLH_3225 from Clostridium botulinum (strain Alaska E43 / Type E3).